A 328-amino-acid chain; its full sequence is 4-hydroxythreonine-4-phosphate dehydrogenase (328 aa).

Substrate-binding residues include H135 and T136. A divalent metal cation is bound by residues H165, H210, and H265. Positions 273, 282, and 291 each coordinate substrate.

It belongs to the PdxA family. Homodimer. Zn(2+) serves as cofactor. It depends on Mg(2+) as a cofactor. Co(2+) is required as a cofactor.

Its subcellular location is the cytoplasm. It catalyses the reaction 4-(phosphooxy)-L-threonine + NAD(+) = 3-amino-2-oxopropyl phosphate + CO2 + NADH. It functions in the pathway cofactor biosynthesis; pyridoxine 5'-phosphate biosynthesis; pyridoxine 5'-phosphate from D-erythrose 4-phosphate: step 4/5. Its function is as follows. Catalyzes the NAD(P)-dependent oxidation of 4-(phosphooxy)-L-threonine (HTP) into 2-amino-3-oxo-4-(phosphooxy)butyric acid which spontaneously decarboxylates to form 3-amino-2-oxopropyl phosphate (AHAP). The sequence is that of 4-hydroxythreonine-4-phosphate dehydrogenase from Pseudomonas aeruginosa (strain ATCC 15692 / DSM 22644 / CIP 104116 / JCM 14847 / LMG 12228 / 1C / PRS 101 / PAO1).